The chain runs to 98 residues: Large ribosomal subunit protein uL23 (98 aa).

Belongs to the universal ribosomal protein uL23 family. Part of the 50S ribosomal subunit. Contacts protein L29, and trigger factor when it is bound to the ribosome.

Functionally, one of the early assembly proteins it binds 23S rRNA. One of the proteins that surrounds the polypeptide exit tunnel on the outside of the ribosome. Forms the main docking site for trigger factor binding to the ribosome. In Methylorubrum extorquens (strain CM4 / NCIMB 13688) (Methylobacterium extorquens), this protein is Large ribosomal subunit protein uL23.